The primary structure comprises 95 residues: Protein TusB (95 aa).

Belongs to the DsrH/TusB family. In terms of assembly, heterohexamer, formed by a dimer of trimers. The hexameric TusBCD complex contains 2 copies each of TusB, TusC and TusD. The TusBCD complex interacts with TusE.

It localises to the cytoplasm. Part of a sulfur-relay system required for 2-thiolation of 5-methylaminomethyl-2-thiouridine (mnm(5)s(2)U) at tRNA wobble positions. This is Protein TusB from Shigella flexneri.